We begin with the raw amino-acid sequence, 151 residues long: Regulatory protein RecX (151 aa).

It belongs to the RecX family.

It is found in the cytoplasm. Modulates RecA activity. This is Regulatory protein RecX from Haemophilus ducreyi (strain 35000HP / ATCC 700724).